The chain runs to 476 residues: MSSFYNEAKFLISDGEQMRIDTYAVGRKTMQQSDAFKGTFYENFTLVYALPLSNHDNSSLMLIAGFYALLFMFGTCGNAAILAVVHHVKGQDPRSRHNTTLTYICILSIVDFLSMLPIPMTIIDQILGFWMFDTFACKLFRLLEHIGKIFSTFILVAFSIDRYCAVCHPLQVRVRNQRTVFVFLGIMFFVTCVMLSPILLYAHSKELVMHEKVDLDQEVITRMHLYKCVDDLGRELFVVFTLYSFVLAYLMPLLFMIYFYYEMLIRLFKQANVIKQTLVGRRSGGEEKKLTIPVGHIAIYTLAICSFHFICWTPYWISILYSLYEELYQDTKSTASPPTYAFIYFMYGVHALPYINSASNFILYGLLNRQLHNAPERKYTRNGVGGRQMSHALTTNTRPEYSELIAIPSSSCRPDSRVSAMIHNNNNNTESLPLAQNISNMTNKDSATIVPMPMSANVDGNEIYNWITPDTESVIL.

Topologically, residues 1–61 (MSSFYNEAKF…LSNHDNSSLM (61 aa)) are extracellular. Asn-43 and Asn-57 each carry an N-linked (GlcNAc...) asparagine glycan. A helical transmembrane segment spans residues 62 to 82 (LIAGFYALLFMFGTCGNAAIL). The Cytoplasmic portion of the chain corresponds to 83–102 (AVVHHVKGQDPRSRHNTTLT). A helical transmembrane segment spans residues 103–123 (YICILSIVDFLSMLPIPMTII). The Extracellular segment spans residues 124 to 139 (DQILGFWMFDTFACKL). The cysteines at positions 137 and 228 are disulfide-linked. Residues 140 to 160 (FRLLEHIGKIFSTFILVAFSI) traverse the membrane as a helical segment. The Cytoplasmic segment spans residues 161–179 (DRYCAVCHPLQVRVRNQRT). A helical transmembrane segment spans residues 180–200 (VFVFLGIMFFVTCVMLSPILL). The Extracellular segment spans residues 201–236 (YAHSKELVMHEKVDLDQEVITRMHLYKCVDDLGREL). A helical transmembrane segment spans residues 237-257 (FVVFTLYSFVLAYLMPLLFMI). Residues 258-291 (YFYYEMLIRLFKQANVIKQTLVGRRSGGEEKKLT) are Cytoplasmic-facing. A helical transmembrane segment spans residues 292–312 (IPVGHIAIYTLAICSFHFICW). Residues 313–334 (TPYWISILYSLYEELYQDTKST) lie on the Extracellular side of the membrane. The helical transmembrane segment at 335 to 355 (ASPPTYAFIYFMYGVHALPYI) threads the bilayer. Residues 356 to 476 (NSASNFILYG…ITPDTESVIL (121 aa)) are Cytoplasmic-facing.

Belongs to the G-protein coupled receptor 1 family. Expressed in sensory neurons including ASER.

It is found in the cell membrane. Its function is as follows. Probable receptor for neuropeptide ligand nlp-9 that plays a role in octopamine signaling and specifically, the octapamine inhibition of aversion responses in olfactory sensory neurons. In AWB olfactory sensory neurons, required for the detection of preferred food sources. The sequence is that of Neuropeptide receptor 18 from Caenorhabditis elegans.